A 140-amino-acid chain; its full sequence is Putative pre-16S rRNA nuclease (140 aa).

The protein belongs to the YqgF nuclease family.

The protein resides in the cytoplasm. In terms of biological role, could be a nuclease involved in processing of the 5'-end of pre-16S rRNA. This Yersinia pseudotuberculosis serotype O:1b (strain IP 31758) protein is Putative pre-16S rRNA nuclease.